The primary structure comprises 114 residues: Large ribosomal subunit protein eL30 (114 aa).

The protein belongs to the eukaryotic ribosomal protein eL30 family.

The sequence is that of Large ribosomal subunit protein eL30 (RPL30) from Branchiostoma belcheri (Amphioxus).